Here is a 373-residue protein sequence, read N- to C-terminus: Probable peptidoglycan glycosyltransferase FtsW (373 aa).

Helical transmembrane passes span 15–35 (LVIL…VYSA), 48–68 (FYFL…MAVA), 80–100 (AVPI…PGIG), 144–164 (FFST…LILL), 168–188 (DLGA…AAGT), 192–212 (YIIA…MNVD), 278–298 (LGLI…LRGV), 311–331 (FLAF…MAVV), and 342–362 (LPFI…VGIL).

The protein belongs to the SEDS family. FtsW subfamily.

It is found in the cell inner membrane. The catalysed reaction is [GlcNAc-(1-&gt;4)-Mur2Ac(oyl-L-Ala-gamma-D-Glu-L-Lys-D-Ala-D-Ala)](n)-di-trans,octa-cis-undecaprenyl diphosphate + beta-D-GlcNAc-(1-&gt;4)-Mur2Ac(oyl-L-Ala-gamma-D-Glu-L-Lys-D-Ala-D-Ala)-di-trans,octa-cis-undecaprenyl diphosphate = [GlcNAc-(1-&gt;4)-Mur2Ac(oyl-L-Ala-gamma-D-Glu-L-Lys-D-Ala-D-Ala)](n+1)-di-trans,octa-cis-undecaprenyl diphosphate + di-trans,octa-cis-undecaprenyl diphosphate + H(+). The protein operates within cell wall biogenesis; peptidoglycan biosynthesis. In terms of biological role, peptidoglycan polymerase that is essential for cell division. The chain is Probable peptidoglycan glycosyltransferase FtsW from Geobacter sulfurreducens (strain DL-1 / KN400).